The chain runs to 300 residues: Sporulation protein SPS18 (300 aa).

Residues 11–130 (ENRKRLLRAK…LANEVRSNDI (120 aa)) form the Arf-GAP domain. The C4-type zinc finger occupies 28-51 (CFECKSVNPQFVSCSFGIFICVNC).

The polypeptide is Sporulation protein SPS18 (SPS18) (Saccharomyces cerevisiae (strain ATCC 204508 / S288c) (Baker's yeast)).